Reading from the N-terminus, the 291-residue chain is Cell division protein FtsX (291 aa).

Residues 1-18 (MSSNFDKFQKRRLISSYF) lie on the Cytoplasmic side of the membrane. A helical membrane pass occupies residues 19 to 39 (SVVLSVFLVLFLLGVLGLFII). Over 40–162 (NSKKLADDFK…VNLVNDNIKK (123 aa)) the chain is Periplasmic. Residues 163-183 (VSMWILIISGFLTVIAVLLIN) traverse the membrane as a helical segment. Residues 184-220 (SSLRLSIHSNRFIIKTMQMVGATKSFIRKPFVMRSVK) lie on the Cytoplasmic side of the membrane. The chain crosses the membrane as a helical span at residues 221-241 (LGMLGALLAIIALIGLLFYVE). Residues 242–253 (TNFPGLGILEDK) are Periplasmic-facing. Residues 254–274 (ALIGLVLLAVFGLGVLITWVS) traverse the membrane as a helical segment. The Cytoplasmic portion of the chain corresponds to 275-291 (THFATQRFLNLRTDDLY).

Belongs to the ABC-4 integral membrane protein family. FtsX subfamily.

Its subcellular location is the cell inner membrane. In terms of biological role, required for cell division and gliding motility. The protein is Cell division protein FtsX of Flavobacterium johnsoniae (strain ATCC 17061 / DSM 2064 / JCM 8514 / BCRC 14874 / CCUG 350202 / NBRC 14942 / NCIMB 11054 / UW101) (Cytophaga johnsonae).